Here is a 219-residue protein sequence, read N- to C-terminus: Ribonuclease HII (219 aa).

In terms of domain architecture, RNase H type-2 spans 30-219; it reads RVIAGIDEAG…VREHVTCPSS (190 aa). A divalent metal cation-binding residues include Asp-36, Glu-37, and Asp-128.

Belongs to the RNase HII family. It depends on Mn(2+) as a cofactor. Mg(2+) serves as cofactor.

It localises to the cytoplasm. The enzyme catalyses Endonucleolytic cleavage to 5'-phosphomonoester.. Functionally, endonuclease that specifically degrades the RNA of RNA-DNA hybrids. In Pelobacter propionicus (strain DSM 2379 / NBRC 103807 / OttBd1), this protein is Ribonuclease HII.